The primary structure comprises 198 residues: Penicillin-binding protein activator LpoB (198 aa).

A signal peptide spans 1-19; sequence MIRSVNRTGALMMALILSG. The N-palmitoyl cysteine moiety is linked to residue Cys-20. Residue Cys-20 is the site of S-diacylglycerol cysteine attachment. A compositionally biased stretch (low complexity) spans 26-37; sequence QPAPVEPTQPVE. The disordered stretch occupies residues 26–59; that stretch reads QPAPVEPTQPVEPVQPVPQPEQPIPQPQPVPQPP. Over residues 38–59 the composition is skewed to pro residues; that stretch reads PVQPVPQPEQPIPQPQPVPQPP.

This sequence belongs to the LpoB family. In terms of assembly, interacts with PBP1b.

It localises to the cell outer membrane. Its function is as follows. Regulator of peptidoglycan synthesis that is essential for the function of penicillin-binding protein 1B (PBP1b). The sequence is that of Penicillin-binding protein activator LpoB from Pantoea ananatis (strain LMG 20103).